The sequence spans 87 residues: Putative BTB/POZ domain-containing protein At3g29740 (87 aa).

One can recognise a BTB domain in the interval 24 to 87; it reads VDVRLKAGDS…KHTELVALVE (64 aa).

It functions in the pathway protein modification; protein ubiquitination. In terms of biological role, may act as a substrate-specific adapter of an E3 ubiquitin-protein ligase complex (CUL3-RBX1-BTB) which mediates the ubiquitination and subsequent proteasomal degradation of target proteins. This is Putative BTB/POZ domain-containing protein At3g29740 from Arabidopsis thaliana (Mouse-ear cress).